Here is a 417-residue protein sequence, read N- to C-terminus: Pelargonidin 3-O-(6-caffeoylglucoside) 5-O-(6-O-malonylglucoside) 4'''-malonyltransferase (417 aa).

Active-site proton acceptor residues include His147 and Asp360.

It belongs to the plant acyltransferase family. In terms of assembly, monomer. In terms of tissue distribution, expressed at higher level in recently opened, fully pigmented flowers.

The enzyme catalyses 4'''-demalonylsalvianin + malonyl-CoA = salvianin + CoA. It functions in the pathway pigment biosynthesis; anthocyanin biosynthesis. Inhibited by the following metal ions: Cd(2+), Cu(2+), Fe(2+), Hg(2+) and Zn(2+). Activity is strongly inhibited by CoA-SH and partially inhibited by acetyl-CoA, caffeic acid and bisdemalonylsalvianin. In terms of biological role, catalyzes the transfer of the malonyl group from malonyl-CoA to the 4'''-hydroxyl group of the 5-glucosyl moiety of anthocyanins. Anthocyanins are ubiquitous colored pigments that are responsible for petal color. The chain is Pelargonidin 3-O-(6-caffeoylglucoside) 5-O-(6-O-malonylglucoside) 4'''-malonyltransferase from Salvia splendens (Scarlet sage).